The chain runs to 125 residues: Large ribosomal subunit protein bL12 (125 aa).

This sequence belongs to the bacterial ribosomal protein bL12 family. As to quaternary structure, homodimer. Part of the ribosomal stalk of the 50S ribosomal subunit. Forms a multimeric L10(L12)X complex, where L10 forms an elongated spine to which 2 to 4 L12 dimers bind in a sequential fashion. Binds GTP-bound translation factors.

Functionally, forms part of the ribosomal stalk which helps the ribosome interact with GTP-bound translation factors. Is thus essential for accurate translation. The chain is Large ribosomal subunit protein bL12 from Coprothermobacter proteolyticus (strain ATCC 35245 / DSM 5265 / OCM 4 / BT).